The following is a 218-amino-acid chain: uncharacterized protein (218 aa).

5 helical membrane passes run 27-49 (IALENAGIPIPGETITLLGGFLA), 57-77 (GGVLIAAIAGAVLGDSCGYWV), 115-135 (VFFGRFVTLLRIFAGPMAGIV), 142-162 (FLLYNIGGASVWAAITVSLAY), and 180-200 (FSWFALAAVVGMVGIYFVFHF).

The protein belongs to the DedA family.

It localises to the cell membrane. This is an uncharacterized protein from Synechocystis sp. (strain ATCC 27184 / PCC 6803 / Kazusa).